The sequence spans 433 residues: Enolase (433 aa).

Residue Gln-167 participates in (2R)-2-phosphoglycerate binding. Glu-209 functions as the Proton donor in the catalytic mechanism. Mg(2+)-binding residues include Asp-246, Glu-291, and Asp-318. (2R)-2-phosphoglycerate contacts are provided by Lys-343, Arg-372, Ser-373, and Lys-394. The active-site Proton acceptor is the Lys-343.

This sequence belongs to the enolase family. As to quaternary structure, component of the RNA degradosome, a multiprotein complex involved in RNA processing and mRNA degradation. It depends on Mg(2+) as a cofactor.

The protein localises to the cytoplasm. It localises to the secreted. The protein resides in the cell surface. The catalysed reaction is (2R)-2-phosphoglycerate = phosphoenolpyruvate + H2O. It functions in the pathway carbohydrate degradation; glycolysis; pyruvate from D-glyceraldehyde 3-phosphate: step 4/5. Catalyzes the reversible conversion of 2-phosphoglycerate (2-PG) into phosphoenolpyruvate (PEP). It is essential for the degradation of carbohydrates via glycolysis. The chain is Enolase from Edwardsiella ictaluri (strain 93-146).